The sequence spans 61 residues: UPF0434 protein Pfl01_4174 (61 aa).

This sequence belongs to the UPF0434 family.

The sequence is that of UPF0434 protein Pfl01_4174 from Pseudomonas fluorescens (strain Pf0-1).